We begin with the raw amino-acid sequence, 345 residues long: Guanine nucleotide-binding protein alpha-4 subunit (345 aa).

Positions 30-345 (KDVKLLLLGP…TILSQALEHF (316 aa)) constitute a G-alpha domain. Residues 33-46 (KLLLLGPGESGKST) form a G1 motif region. Residues 38–45 (GPGESGKS), 171–177 (LRCRVRT), 196–200 (DVGGQ), 265–268 (NKKD), and A320 each bind GTP. The Mg(2+) site is built by S45 and T177. Residues 169–177 (DVLRCRVRT) are G2 motif. A G3 motif region spans residues 192–201 (LKIVDVGGQR). The segment at 261–268 (VLFLNKKD) is G4 motif. A G5 motif region spans residues 318 to 323 (TCAVDT).

Belongs to the G-alpha family. G proteins are composed of 3 units; alpha, beta and gamma. The alpha chain contains the guanine nucleotide binding site.

Guanine nucleotide-binding proteins (G proteins) are involved as modulators or transducers in various transmembrane signaling systems. G alpha-4 plays a role in morphogenesis of the multicellular structure. The polypeptide is Guanine nucleotide-binding protein alpha-4 subunit (gpaD) (Dictyostelium discoideum (Social amoeba)).